Reading from the N-terminus, the 446-residue chain is Probable glycine dehydrogenase (decarboxylating) subunit 1 (446 aa).

Belongs to the GcvP family. N-terminal subunit subfamily. In terms of assembly, the glycine cleavage system is composed of four proteins: P, T, L and H. In this organism, the P 'protein' is a heterodimer of two subunits.

The enzyme catalyses N(6)-[(R)-lipoyl]-L-lysyl-[glycine-cleavage complex H protein] + glycine + H(+) = N(6)-[(R)-S(8)-aminomethyldihydrolipoyl]-L-lysyl-[glycine-cleavage complex H protein] + CO2. The glycine cleavage system catalyzes the degradation of glycine. The P protein binds the alpha-amino group of glycine through its pyridoxal phosphate cofactor; CO(2) is released and the remaining methylamine moiety is then transferred to the lipoamide cofactor of the H protein. The polypeptide is Probable glycine dehydrogenase (decarboxylating) subunit 1 (Methylocella silvestris (strain DSM 15510 / CIP 108128 / LMG 27833 / NCIMB 13906 / BL2)).